Reading from the N-terminus, the 424-residue chain is Serine--tRNA ligase (424 aa).

L-serine is bound at residue 229–231 (TAE). ATP is bound by residues 260–262 (RKE) and Val-276. Glu-283 provides a ligand contact to L-serine. Residue 347 to 350 (ELVS) participates in ATP binding. Thr-383 is a binding site for L-serine.

The protein belongs to the class-II aminoacyl-tRNA synthetase family. Type-1 seryl-tRNA synthetase subfamily. Homodimer. The tRNA molecule binds across the dimer.

It localises to the cytoplasm. The catalysed reaction is tRNA(Ser) + L-serine + ATP = L-seryl-tRNA(Ser) + AMP + diphosphate + H(+). It catalyses the reaction tRNA(Sec) + L-serine + ATP = L-seryl-tRNA(Sec) + AMP + diphosphate + H(+). It functions in the pathway aminoacyl-tRNA biosynthesis; selenocysteinyl-tRNA(Sec) biosynthesis; L-seryl-tRNA(Sec) from L-serine and tRNA(Sec): step 1/1. Catalyzes the attachment of serine to tRNA(Ser). Is also able to aminoacylate tRNA(Sec) with serine, to form the misacylated tRNA L-seryl-tRNA(Sec), which will be further converted into selenocysteinyl-tRNA(Sec). The chain is Serine--tRNA ligase from Methanosphaera stadtmanae (strain ATCC 43021 / DSM 3091 / JCM 11832 / MCB-3).